We begin with the raw amino-acid sequence, 236 residues long: 1-(5-phosphoribosyl)-5-[(5-phosphoribosylamino)methylideneamino] imidazole-4-carboxamide isomerase (236 aa).

Asp8 functions as the Proton acceptor in the catalytic mechanism. Asp129 functions as the Proton donor in the catalytic mechanism.

This sequence belongs to the HisA/HisF family.

Its subcellular location is the cytoplasm. The enzyme catalyses 1-(5-phospho-beta-D-ribosyl)-5-[(5-phospho-beta-D-ribosylamino)methylideneamino]imidazole-4-carboxamide = 5-[(5-phospho-1-deoxy-D-ribulos-1-ylimino)methylamino]-1-(5-phospho-beta-D-ribosyl)imidazole-4-carboxamide. It participates in amino-acid biosynthesis; L-histidine biosynthesis; L-histidine from 5-phospho-alpha-D-ribose 1-diphosphate: step 4/9. This chain is 1-(5-phosphoribosyl)-5-[(5-phosphoribosylamino)methylideneamino] imidazole-4-carboxamide isomerase, found in Methanoregula boonei (strain DSM 21154 / JCM 14090 / 6A8).